Here is a 433-residue protein sequence, read N- to C-terminus: Type I acyl-CoA thioesterase mpaH (433 aa).

Residues 58–246 are abhydrolase domain; the sequence is HGVGLPKELY…VKARFDAAAD (189 aa). A substrate-binding site is contributed by Val60. Ser139 acts as the Nucleophile in catalysis. Phe140 is a binding site for substrate. Catalysis depends on residues Asp163 and His365.

The protein belongs to the AB hydrolase superfamily. MpaH hydrolase family. Homodimer.

Its subcellular location is the peroxisome matrix. It catalyses the reaction mycophenolyl-CoA + H2O = mycophenolate + CoA + H(+). It functions in the pathway secondary metabolite biosynthesis; terpenoid biosynthesis. Functionally, type I acyl-CoA thioesterase; part of the gene cluster that mediates the biosynthesis of mycophenolic acid (MPA), the first isolated antibiotic natural product in the world obtained from a culture of Penicillium brevicompactum in 1893. MpaH acts as a peroxisomal acyl-CoA hydrolase that converts MPA-CoA into the final product MPA. The first step of the pathway is the synthesis of 5-methylorsellinic acid (5MOA) by the cytosolic polyketide synthase mpaC. 5MOA is then converted to the phthalide compound 5,7-dihydroxy-4,6-dimethylphthalide (DHMP) by the endoplasmic reticulum-bound cytochrome P450 monooxygenase mpaDE. MpaDE first catalyzes hydroxylation of 5-MOA to 4,6-dihydroxy-2-(hydroxymethyl)-3-methylbenzoic acid (DHMB). MpaDE then acts as a lactone synthase that catalyzes the ring closure to convert DHMB into DHMP. The next step is the prenylation of DHMP by the Golgi apparatus-associated prenyltransferase mpaA to yield farnesyl-DHMP (FDHMP). The ER-bound oxygenase mpaB then mediates the oxidative cleavage the C19-C20 double bond in FDHMP to yield FDHMP-3C via a mycophenolic aldehyde intermediate. The O-methyltransferase mpaG catalyzes the methylation of FDHMP-3C to yield MFDHMP-3C. After the cytosolic methylation of FDHMP-3C, MFDHMP-3C enters into peroxisomes probably via free diffusion due to its low molecular weight. Upon a peroxisomal CoA ligation reaction, catalyzed by a beta-oxidation component enzyme acyl-CoA ligase ACL891, MFDHMP-3C-CoA would then be restricted to peroxisomes for the following beta-oxidation pathway steps. The peroxisomal beta-oxidation machinery than converts MFDHMP-3C-CoA into MPA_CoA, via a beta-oxidation chain-shortening process. Finally mpaH acts as a peroxisomal acyl-CoA hydrolase with high substrate specificity toward MPA-CoA to release the final product MPA. In Penicillium roqueforti (strain FM164), this protein is Type I acyl-CoA thioesterase mpaH.